Reading from the N-terminus, the 231-residue chain is Small ribosomal subunit protein uS3 (231 aa).

Positions 39–107 (IRKHIMKAIP…DVSLNIVEIR (69 aa)) constitute a KH type-2 domain.

This sequence belongs to the universal ribosomal protein uS3 family. In terms of assembly, part of the 30S ribosomal subunit. Forms a tight complex with proteins S10 and S14.

Functionally, binds the lower part of the 30S subunit head. Binds mRNA in the 70S ribosome, positioning it for translation. The protein is Small ribosomal subunit protein uS3 of Rhizorhabdus wittichii (strain DSM 6014 / CCUG 31198 / JCM 15750 / NBRC 105917 / EY 4224 / RW1) (Sphingomonas wittichii).